Reading from the N-terminus, the 971-residue chain is Exportin-2 (971 aa).

The residue at position 1 (methionine 1) is an N-acetylmethionine. Residues 29 to 102 (AEKFLESVEG…KANIVHLMLS (74 aa)) enclose the Importin N-terminal domain. Serine 112 is modified (phosphoserine). N6-acetyllysine is present on residues lysine 574 and lysine 824. At serine 931 the chain carries Phosphoserine.

Belongs to the XPO2/CSE1 family. As to quaternary structure, found in a complex with CSE1L/XPO2, Ran and KPNA2. Binds with high affinity to importin-alpha only in the presence of RanGTP. The complex is dissociated by the combined action of RanBP1 and RanGAP1. Interacts with CFTR.

The protein localises to the cytoplasm. It localises to the nucleus. Functionally, export receptor for importin-alpha. Mediates importin-alpha re-export from the nucleus to the cytoplasm after import substrates (cargos) have been released into the nucleoplasm. In the nucleus binds cooperatively to importin-alpha and to the GTPase Ran in its active GTP-bound form. Docking of this trimeric complex to the nuclear pore complex (NPC) is mediated through binding to nucleoporins. Upon transit of a nuclear export complex into the cytoplasm, disassembling of the complex and hydrolysis of Ran-GTP to Ran-GDP (induced by RANBP1 and RANGAP1, respectively) cause release of the importin-alpha from the export receptor. CSE1L/XPO2 then return to the nuclear compartment and mediate another round of transport. The directionality of nuclear export is thought to be conferred by an asymmetric distribution of the GTP- and GDP-bound forms of Ran between the cytoplasm and nucleus. The chain is Exportin-2 (CSE1L) from Bos taurus (Bovine).